Consider the following 494-residue polypeptide: Apolipoprotein N-acyltransferase (494 aa).

Transmembrane regions (helical) follow at residues 16-36 (TVGGLLAGVGLSQGGVVFIWI), 41-61 (LWASMAFPSAVFLWGLFAILL), 62-82 (SYRWLLYLHPLTWIGVPIAFS), 133-153 (LIWGLVEVGLAKSPFFWFGLG), 173-193 (GGLAALQLILGWWVWKIIFAF), and 202-222 (LFALGVCSLLLAHCIGWILLA). In terms of domain architecture, CN hydrolase spans 235-461 (WQTNIPTRQK…EGVGVIDINV (227 aa)). Glu276 (proton acceptor) is an active-site residue. Residue Lys325 is part of the active site. Cys373 acts as the Nucleophile in catalysis. The chain crosses the membrane as a helical span at residues 468 to 488 (YVRWGEIPLISSLLIVLCFIA).

Belongs to the CN hydrolase family. Apolipoprotein N-acyltransferase subfamily.

The protein resides in the cell inner membrane. It carries out the reaction N-terminal S-1,2-diacyl-sn-glyceryl-L-cysteinyl-[lipoprotein] + a glycerophospholipid = N-acyl-S-1,2-diacyl-sn-glyceryl-L-cysteinyl-[lipoprotein] + a 2-acyl-sn-glycero-3-phospholipid + H(+). It functions in the pathway protein modification; lipoprotein biosynthesis (N-acyl transfer). Catalyzes the phospholipid dependent N-acylation of the N-terminal cysteine of apolipoprotein, the last step in lipoprotein maturation. The protein is Apolipoprotein N-acyltransferase of Prochlorococcus marinus (strain SARG / CCMP1375 / SS120).